A 190-amino-acid chain; its full sequence is Endoribonuclease YbeY (190 aa).

The interval 1 to 25 (MSQPRPGHRPDCNGADPDSNFASMT) is disordered. Residues His-147, His-151, and His-157 each coordinate Zn(2+).

It belongs to the endoribonuclease YbeY family. Zn(2+) serves as cofactor.

Its subcellular location is the cytoplasm. Its function is as follows. Single strand-specific metallo-endoribonuclease involved in late-stage 70S ribosome quality control and in maturation of the 3' terminus of the 16S rRNA. In Rhodopseudomonas palustris (strain ATCC BAA-98 / CGA009), this protein is Endoribonuclease YbeY.